Reading from the N-terminus, the 959-residue chain is General transcription factor II-I repeat domain-containing protein 1 (959 aa).

Residues K27 and K94 each participate in a glycyl lysine isopeptide (Lys-Gly) (interchain with G-Cter in SUMO2) cross-link. Residues 96 to 106 (PEAEHPKKVQR) are compositionally biased toward basic and acidic residues. Residues 96–117 (PEAEHPKKVQRGEGGGRSLPRS) are disordered. One copy of the GTF2I-like 1 repeat lies at 119–213 (LEHGSDVYLL…LEDGGRDSKA (95 aa)). Glycyl lysine isopeptide (Lys-Gly) (interchain with G-Cter in SUMO2) cross-links involve residues K184, K212, K225, K238, K271, K294, K308, K337, K436, K439, and K443. The disordered stretch occupies residues 230 to 250 (CGLHGQAPKVPPQDLPPTATS). The stretch at 342–436 (IKETEDINTL…FDERIFTGNK (95 aa)) is one GTF2I-like 2 repeat. S448 is subject to Phosphoserine. The interval 468-492 (NARSDKGSMSEDCGPGTSGELGGLR) is disordered. A GTF2I-like 3 repeat occupies 556–650 (DSHGDVIRPL…ELLTEGVKEP (95 aa)). Residues K567, K579, K588, K622, K638, and K648 each participate in a glycyl lysine isopeptide (Lys-Gly) (interchain with G-Cter in SUMO2) cross-link. S654 is subject to Phosphoserine. The interval 654–679 (SQGTASSLGFSPPALPPERDSGDPLV) is disordered. Glycyl lysine isopeptide (Lys-Gly) (interchain with G-Cter in SUMO2) cross-links involve residues P669, P670, D680, and K684. Q686 bears the Phosphoserine mark. 2 GTF2I-like repeats span residues 696–790 (LSRI…KPDE) and 793–887 (ANRL…ICND). Residues I701, K724, K732, K772, K774, K787, K829, K889, and K893 each participate in a glycyl lysine isopeptide (Lys-Gly) (interchain with G-Cter in SUMO2) cross-link. A disordered region spans residues 892-927 (AKDSSIPKRKRKRVSEGNSVSSSSSSSSSSSSNPDS). A Nuclear localization signal motif is present at residues 898-905 (PKRKRKRV). A compositionally biased stretch (low complexity) spans 910-923 (SVSSSSSSSSSSSS).

It belongs to the TFII-I family. Interacts with the retinoblastoma protein (RB1) via its C-terminus. As to expression, highly expressed in adult skeletal muscle, heart, fibroblast, bone and fetal tissues. Expressed at lower levels in all other tissues tested.

The protein localises to the nucleus. May be a transcription regulator involved in cell-cycle progression and skeletal muscle differentiation. May repress GTF2I transcriptional functions, by preventing its nuclear residency, or by inhibiting its transcriptional activation. May contribute to slow-twitch fiber type specificity during myogenesis and in regenerating muscles. Binds troponin I slow-muscle fiber enhancer (USE B1). Binds specifically and with high affinity to the EFG sequences derived from the early enhancer of HOXC8. In Homo sapiens (Human), this protein is General transcription factor II-I repeat domain-containing protein 1 (GTF2IRD1).